Here is a 134-residue protein sequence, read N- to C-terminus: Small ribosomal subunit protein bS16 (134 aa).

The disordered stretch occupies residues Ala-79–Glu-134. A compositionally biased stretch (low complexity) spans Ala-115–Glu-134.

Belongs to the bacterial ribosomal protein bS16 family.

This chain is Small ribosomal subunit protein bS16, found in Brucella canis (strain ATCC 23365 / NCTC 10854 / RM-666).